We begin with the raw amino-acid sequence, 161 residues long: Anthranilate 1,2-dioxygenase small subunit (161 aa).

The protein belongs to the bacterial ring-hydroxylating dioxygenase beta subunit family. As to quaternary structure, part of a multicomponent enzyme system composed of a reductase (AndAa), a ferredoxin (AndAb) and a two-subunit oxygenase component (AndAc and AndAd).

It catalyses the reaction anthranilate + NADH + O2 + 3 H(+) = catechol + NH4(+) + CO2 + NAD(+). The enzyme catalyses anthranilate + NADPH + O2 + 3 H(+) = catechol + NH4(+) + CO2 + NADP(+). The protein operates within aromatic compound metabolism; anthranilate degradation via hydroxylation; catechol from anthranilate: step 1/1. Functionally, oxygenase component of anthranilate dioxygenase multicomponent enzyme system which catalyzes the incorporation of both atoms of molecular oxygen into anthranilate to form catechol. Can also act on benzoate and salicylate but not on 2-chlorobenzoate or o-toluate. This chain is Anthranilate 1,2-dioxygenase small subunit, found in Burkholderia cepacia (Pseudomonas cepacia).